Here is a 275-residue protein sequence, read N- to C-terminus: Undecaprenyl-diphosphatase (275 aa).

8 helical membrane passes run 4–24 (IYGL…EFLP), 54–74 (LGSI…LFGL), 92–112 (LHLY…LMFY), 123–143 (YVMY…LIHD), 154–174 (ISYL…LPGF), 194–214 (AFEF…ILDL), 228–248 (MFII…KLFW), and 255–275 (SFIP…LILI).

This sequence belongs to the UppP family.

The protein localises to the cell membrane. It carries out the reaction di-trans,octa-cis-undecaprenyl diphosphate + H2O = di-trans,octa-cis-undecaprenyl phosphate + phosphate + H(+). In terms of biological role, catalyzes the dephosphorylation of undecaprenyl diphosphate (UPP). Confers resistance to bacitracin. The chain is Undecaprenyl-diphosphatase from Baumannia cicadellinicola subsp. Homalodisca coagulata.